The primary structure comprises 606 residues: Polyphenol oxidase A1, chloroplastic (606 aa).

Residues 1–92 (MTSISALSFI…TLATNPSALA (92 aa)) constitute a chloroplast transit peptide. A disordered region spans residues 32-63 (KQHQSSKLRKPKRQVTCSSNNNQNNPKEEQEL). Positions 35–44 (QSSKLRKPKR) are enriched in basic residues. 2 cysteine pairs are disulfide-bonded: Cys-103–Cys-121 and Cys-120–Cys-182. Residues His-181, His-202, His-211, His-333, His-337, and His-367 each contribute to the Cu cation site. Positions 185–202 (CDGAYSQIGFPDLKLQVH) form a cross-link, 2'-(S-cysteinyl)-histidine (Cys-His).

It belongs to the tyrosinase family. The cofactor is Cu(2+).

The protein resides in the plastid. The protein localises to the chloroplast thylakoid lumen. The enzyme catalyses 2 catechol + O2 = 2 1,2-benzoquinone + 2 H2O. In terms of biological role, catalyzes the oxidation of mono- and o-diphenols to o-diquinones. The polypeptide is Polyphenol oxidase A1, chloroplastic (Vicia faba (Broad bean)).